The sequence spans 430 residues: Forkhead box protein N2 (430 aa).

A disordered region spans residues 1–47 (MGPATGMTPDKNIESPTAEKVPGLSQTENMGSLPEEVGAARPKASMV). The fork-head DNA-binding region spans 108 to 204 (KPPYSFSLLI…QALKKQPFSS (97 aa)). Disordered regions lie at residues 299–326 (NIDP…SVSS) and 338–391 (PKNS…EASQ). Residues 355-366 (DDTDIDYEEDTL) are compositionally biased toward acidic residues. The segment covering 381–390 (HGSKLRKEAS) has biased composition (basic and acidic residues).

As to expression, expressed in the developing eye from stage 23. Localized to the prospective retinal layer and a layer of cells lateral to the ventricular zone. At stage 29, expression extends to the branchial arches and the brain. At stage 33/34, expressed in the vagal ganglion. At stage 36, expression in the retina decreases. Not expressed in the eye lens.

It is found in the nucleus. The protein is Forkhead box protein N2 of Xenopus laevis (African clawed frog).